We begin with the raw amino-acid sequence, 329 residues long: UDP-2,3-diacylglucosamine pyrophosphatase LpxG (329 aa).

The helical transmembrane segment at 2-24 (FVFVGSTVSLTAIVAAPVLTWIW) threads the bilayer. Positions 59, 61, 91, 123, 257, and 259 each coordinate a divalent metal cation.

This sequence belongs to the metallophosphoesterase superfamily. Mn(2+) is required as a cofactor.

The protein localises to the cell inner membrane. The catalysed reaction is UDP-2,3-diacyl-alpha-D-glucosamine + H2O = 2,3-diacyl-alpha-D-glucosaminyl 1-phosphate + UMP + 2 H(+). It participates in glycolipid biosynthesis; lipid IV(A) biosynthesis. Hydrolyzes the pyrophosphate bond of UDP-2,3-diacylglucosamine to form 2,3-diacylglucosamine 1-phosphate (lipid X) and UMP by catalyzing the attack of water at the alpha-P atom. Involved in the biosynthesis of lipid A, a phosphorylated glycolipid that anchors the lipooligosaccharide (LOS) to the outer membrane of the cell. This chain is UDP-2,3-diacylglucosamine pyrophosphatase LpxG, found in Chlamydia muridarum (strain MoPn / Nigg).